The following is a 772-amino-acid chain: Carnitine O-palmitoyltransferase 1, muscle isoform (772 aa).

At 1–47 (MAEAHQAVAFQFTVTPDGVDFRLSREALKHVYLSGINSWKKRLIRIK) the chain is on the cytoplasmic side. A helical membrane pass occupies residues 48–73 (NGILRGVYPGSPTSWLVVIMATVGSS). Residues 74–102 (FCNVDISLGLVSCIQRCLPQGCGPYQTPQ) are Mitochondrial intermembrane-facing. A helical transmembrane segment spans residues 103-122 (TRALLSMAIFSTGVWVTGIF). At 123–772 (FFRQTLKLLL…DLFQVPKAYS (650 aa)) the chain is on the cytoplasmic side. The Proton acceptor role is filled by His-473. 555-567 (GKGLIKKCRTSPD) contacts CoA. Residues Tyr-589 and Thr-602 each contribute to the (R)-carnitine site.

The protein belongs to the carnitine/choline acetyltransferase family. Strong expression in heart and skeletal muscle. No expression in liver and kidney.

The protein resides in the mitochondrion outer membrane. It catalyses the reaction (R)-carnitine + hexadecanoyl-CoA = O-hexadecanoyl-(R)-carnitine + CoA. It functions in the pathway lipid metabolism; fatty acid beta-oxidation. Functionally, catalyzes the transfer of the acyl group of long-chain fatty acid-CoA conjugates onto carnitine, an essential step for the mitochondrial uptake of long-chain fatty acids and their subsequent beta-oxidation in the mitochondrion. This Homo sapiens (Human) protein is Carnitine O-palmitoyltransferase 1, muscle isoform (CPT1B).